A 313-amino-acid chain; its full sequence is Antiviral protein I (313 aa).

Positions 1-22 (MKSMLVVTISIWLILAPTSTWA) are cleaved as a signal peptide. Disulfide bonds link cysteine 56-cysteine 281 and cysteine 107-cysteine 128. Residue tyrosine 94 is part of the active site. Valine 95 is a binding site for substrate. Serine 143 contributes to the substrate binding site. Tyrosine 145 is a catalytic residue. Serine 197 contacts substrate. Residues glutamate 198 and arginine 201 contribute to the active site. Arginine 201 lines the substrate pocket. The propeptide occupies 286–313 (NQNAMFPQLIMSTYYNYMVNLGDLFEGF).

Belongs to the ribosome-inactivating protein family. Type 1 RIP subfamily. Monomer. Expressed in spring leaves (at protein level). Expressed in roots (at protein level).

The catalysed reaction is Endohydrolysis of the N-glycosidic bond at one specific adenosine on the 28S rRNA.. In terms of biological role, possesses antiviral potency. Inhibits viral infection of plants (tobacco mosaic virus). Inhibits protein synthesis. Releases both adenine and guanine from Escherichia coli rRNA in vitro. Activity on guanine is 20 times slower than that on adenine. This is Antiviral protein I (PAP1) from Phytolacca americana (American pokeweed).